A 371-amino-acid polypeptide reads, in one-letter code: Protein lifeguard 1 (371 aa).

The tract at residues 1-145 is disordered; it reads MSHEKSFLVS…EGPPSYYDNQ (145 aa). The segment covering 14–49 has biased composition (pro residues); that stretch reads YPPPNPGYPGGPQPPMPPYAQPPYPGAPYPQPPFQP. Residues 84–98 show a composition bias toward low complexity; it reads YPQEGYPQGPYPQGG. Pro residues predominate over residues 102–114; sequence GPYPQSPFPPNPY. 7 helical membrane-spanning segments follow: residues 165 to 185, 197 to 217, 228 to 248, 253 to 273, 283 to 303, 307 to 327, and 346 to 366; these read VFLV…VFTF, VWTY…LSCC, LVAL…IASF, AVIM…IFSM, MGVL…CIFI, ILEI…LAVD, and FAAL…LTII.

This sequence belongs to the BI1 family. LFG subfamily.

The protein resides in the membrane. In terms of biological role, potential apoptotic regulator. In Homo sapiens (Human), this protein is Protein lifeguard 1 (GRINA).